The chain runs to 254 residues: RNA polymerase sigma factor SigI8 (254 aa).

Residues 61 to 74 (DEYSIALIAFNEAI) carry the Polymerase core binding motif. Residues 209–228 (YKELTERFNLCRRTLEKNRK) constitute a DNA-binding region (H-T-H motif).

The protein belongs to the sigma-70 factor family. SigI subfamily. Interacts with RsgI8.

Its subcellular location is the cytoplasm. Negatively regulated by the anti-sigma-I factor RsgI8. Sigma factors are initiation factors that promote the attachment of RNA polymerase to specific initiation sites and are then released. The protein is RNA polymerase sigma factor SigI8 of Acetivibrio thermocellus (strain ATCC 27405 / DSM 1237 / JCM 9322 / NBRC 103400 / NCIMB 10682 / NRRL B-4536 / VPI 7372) (Clostridium thermocellum).